The following is a 422-amino-acid chain: m7GpppN-mRNA hydrolase (422 aa).

The region spanning 95–226 (MGVPTYGAII…KLGLAPNKFF (132 aa)) is the Nudix hydrolase domain. A Nudix box motif is present at residues 129–150 (GKVNKEEAPHDCAAREVFEETG). Glu144 and Glu148 together coordinate Mn(2+). A phosphoserine mark is found at Ser246, Ser247, Ser249, Ser276, and Ser284. The interval 247–347 (SDSDNGFSSA…GVHGQPAKQQ (101 aa)) is disordered. The span at 249–258 (SDNGFSSAGS) shows a compositional bias: low complexity. Basic and acidic residues predominate over residues 303 to 312 (NHGEVSDLLK).

It belongs to the Nudix hydrolase family. DCP2 subfamily. Found in a mRNA decay complex with LSM1, LSM3, LSM4, EXOSC2, EXOSC4, EXOSC10, PARN, XRN1, CNOT6, UPF1, UPF2 and UPF3B. Forms a complex with DCP1A, EDC3, DDX6 and EDC4/HEDLS, within this complex directly interacts with EDC4/HEDLS. Interacts with DPC1B, UPF1, UPF2 and UPF3B. Associates with polysomes. Interacts (via N-terminus and C-terminus) with TRIM21 (via N-terminus and C-terminus). Interacts with LIMD1, WTIP and AJUBA. Interacts with DDX17 in an RNA-dependent manner. Interacts with ZC3HAV1. Interacts with APOBEC3G in an RNA-dependent manner. Interacts with ZFP36L1 (via N-terminus). Interacts with NBDY. Mn(2+) serves as cofactor. It depends on Mg(2+) as a cofactor. As to expression, strongly expressed in brain and testis. Weakly expressed in lung. Not detected in heart, liver, kidney and muscle (at protein level).

The protein localises to the cytoplasm. Its subcellular location is the P-body. It localises to the nucleus. The catalysed reaction is a 5'-end (N(7)-methyl 5'-triphosphoguanosine)-ribonucleoside in mRNA + H2O = N(7)-methyl-GDP + a 5'-end phospho-ribonucleoside in mRNA + 2 H(+). Functionally, decapping metalloenzyme that catalyzes the cleavage of the cap structure on mRNAs. Removes the 7-methyl guanine cap structure from mRNA molecules, yielding a 5'-phosphorylated mRNA fragment and 7m-GDP. Necessary for the degradation of mRNAs, both in normal mRNA turnover and in nonsense-mediated mRNA decay. Plays a role in replication-dependent histone mRNA degradation. Has higher activity towards mRNAs that lack a poly(A) tail. Has no activity towards a cap structure lacking an RNA moiety. The presence of a N(6)-methyladenosine methylation at the second transcribed position of mRNAs (N(6),2'-O-dimethyladenosine cap; m6A(m)) provides resistance to DCP2-mediated decapping. Blocks autophagy in nutrient-rich conditions by repressing the expression of ATG-related genes through degradation of their transcripts. This Mus musculus (Mouse) protein is m7GpppN-mRNA hydrolase (Dcp2).